The following is a 351-amino-acid chain: DNA polymerase IV (351 aa).

In terms of domain architecture, UmuC spans 4–185 (IIHVDMDCFF…LPLAKIPGVG (182 aa)). Mg(2+) contacts are provided by Asp8 and Asp103. Glu104 is a catalytic residue.

Belongs to the DNA polymerase type-Y family. As to quaternary structure, monomer. Mg(2+) is required as a cofactor.

Its subcellular location is the cytoplasm. It carries out the reaction DNA(n) + a 2'-deoxyribonucleoside 5'-triphosphate = DNA(n+1) + diphosphate. Functionally, poorly processive, error-prone DNA polymerase involved in untargeted mutagenesis. Copies undamaged DNA at stalled replication forks, which arise in vivo from mismatched or misaligned primer ends. These misaligned primers can be extended by PolIV. Exhibits no 3'-5' exonuclease (proofreading) activity. May be involved in translesional synthesis, in conjunction with the beta clamp from PolIII. The chain is DNA polymerase IV from Salmonella paratyphi B (strain ATCC BAA-1250 / SPB7).